The chain runs to 240 residues: NADPH-flavin oxidoreductase (240 aa).

Residues 11–15 (HRSIR), Ser39, 67–69 (QAY), 128–131 (YIGG), and 167–169 (KPR) contribute to the FMN site.

The protein belongs to the flavin oxidoreductase frp family. Homodimer.

The enzyme catalyses FMNH2 + NADP(+) = FMN + NADPH + 2 H(+). Functionally, catalyzes the NADPH-dependent reduction of FMN to FMNH(2). Involved in bioluminescence by providing FMNH(2) to luciferase. In Vibrio harveyi (Beneckea harveyi), this protein is NADPH-flavin oxidoreductase.